A 329-amino-acid polypeptide reads, in one-letter code: Cysteine synthase (329 aa).

K48 is modified (N6-(pyridoxal phosphate)lysine). Pyridoxal 5'-phosphate contacts are provided by residues N78, 183 to 187 (GTGGT), and S278.

Belongs to the cysteine synthase/cystathionine beta-synthase family. In terms of assembly, homodimer. It depends on pyridoxal 5'-phosphate as a cofactor.

It carries out the reaction O-acetyl-L-serine + hydrogen sulfide = L-cysteine + acetate. It participates in amino-acid biosynthesis; L-cysteine biosynthesis; L-cysteine from L-serine: step 2/2. Functionally, catalyzes the conversion of O-acetylserine (OAS) to cysteine through the elimination of acetate and addition of hydrogen sulfide. The polypeptide is Cysteine synthase (srpG) (Synechococcus elongatus (strain ATCC 33912 / PCC 7942 / FACHB-805) (Anacystis nidulans R2)).